The primary structure comprises 406 residues: Imidazolonepropionase (406 aa).

Histidine 65 and histidine 67 together coordinate Fe(3+). Residues histidine 65 and histidine 67 each coordinate Zn(2+). The 4-imidazolone-5-propanoate site is built by arginine 74, tyrosine 137, and histidine 170. Tyrosine 137 is a binding site for N-formimidoyl-L-glutamate. Histidine 235 provides a ligand contact to Fe(3+). Histidine 235 provides a ligand contact to Zn(2+). A 4-imidazolone-5-propanoate-binding site is contributed by glutamine 238. Residue aspartate 310 participates in Fe(3+) binding. Residue aspartate 310 coordinates Zn(2+). N-formimidoyl-L-glutamate is bound by residues asparagine 312 and glycine 314. Threonine 315 contributes to the 4-imidazolone-5-propanoate binding site.

The protein belongs to the metallo-dependent hydrolases superfamily. HutI family. Zn(2+) serves as cofactor. The cofactor is Fe(3+).

It is found in the cytoplasm. The catalysed reaction is 4-imidazolone-5-propanoate + H2O = N-formimidoyl-L-glutamate. Its pathway is amino-acid degradation; L-histidine degradation into L-glutamate; N-formimidoyl-L-glutamate from L-histidine: step 3/3. In terms of biological role, catalyzes the hydrolytic cleavage of the carbon-nitrogen bond in imidazolone-5-propanoate to yield N-formimidoyl-L-glutamate. It is the third step in the universal histidine degradation pathway. This is Imidazolonepropionase from Vibrio vulnificus (strain YJ016).